The primary structure comprises 172 residues: Protein nemuri (172 aa).

A signal peptide spans 1-25; that stretch reads MSAKYTLIFALAALCCLVFSTEAAA. The tract at residues 27-172 is disordered; that stretch reads RSRVLSSRRG…KRRSGKGNKA (146 aa). Basic and acidic residues-rich tracts occupy residues 35 to 50, 58 to 90, and 97 to 108; these read RGSELVEKTSDNKEDS, DLERQEQEEQNDRLEGRSDDVAEGSDNKEDKET, and TIVKPNKDDARA. Positions 45 to 74 form a coiled coil; sequence DNKEDSELAAQEQDLERQEQEEQNDRLEGR. Basic residues predominate over residues 109-172; the sequence is RRIVRAGRRR…KRRSGKGNKA (64 aa).

In terms of tissue distribution, detected in the brain where it accumulates in the dorsal fan-shaped body following sleep deprivation (at protein level). Expressed in the adult body.

It is found in the secreted. Antimicrobial protein which is essential for the homeostatic regulation of sleep. Promotes sleep following sleep deprivation or bacterial infection and increases survival following bacterial infection. Likely to promote survival to bacterial infection in two ways; by contributing to the innate immune response and by promoting sleep during sickness to aid recovery. This chain is Protein nemuri, found in Drosophila melanogaster (Fruit fly).